The primary structure comprises 104 residues: Large ribosomal subunit protein bL21 (104 aa).

It belongs to the bacterial ribosomal protein bL21 family. As to quaternary structure, part of the 50S ribosomal subunit. Contacts protein L20.

Functionally, this protein binds to 23S rRNA in the presence of protein L20. In Leptospira borgpetersenii serovar Hardjo-bovis (strain JB197), this protein is Large ribosomal subunit protein bL21.